A 289-amino-acid polypeptide reads, in one-letter code: Protoheme IX farnesyltransferase 2 (289 aa).

The next 9 membrane-spanning stretches (helical) occupy residues 4–24, 28–48, 66–86, 99–118, 124–144, 155–175, 199–219, 221–241, and 256–276; these read PGIIFGNLISVAGGFLLAAKG, LVLMLASLVGLSLVVASGCAI, RVTVTGEIAVGNVLAFGLALG, ALALLFAVIGYIVYVGVYSL, SVYGTLVGSFSGAVPPVVGYC, AILLLMFSLWQMPHSYAIAIF, LHIVLYIAVFALVSALLPLAG, TGIAFMAVTCATSLWWLAMAL, and QVFGFSIITITALSVTMALDF.

It belongs to the UbiA prenyltransferase family. Protoheme IX farnesyltransferase subfamily.

The protein resides in the cell inner membrane. It carries out the reaction heme b + (2E,6E)-farnesyl diphosphate + H2O = Fe(II)-heme o + diphosphate. It functions in the pathway porphyrin-containing compound metabolism; heme O biosynthesis; heme O from protoheme: step 1/1. Its function is as follows. Converts heme B (protoheme IX) to heme O by substitution of the vinyl group on carbon 2 of heme B porphyrin ring with a hydroxyethyl farnesyl side group. This chain is Protoheme IX farnesyltransferase 2, found in Shewanella baltica (strain OS195).